The sequence spans 513 residues: MRTDVFLQRRKRRDVLLSIIALLLLIFAIVHLVFCAGLSFQGSSSARVRRDLENASECVQPQSSEFPEGFFTVQERKDGGILIYFMIIFYMLLSVSIVCDEYFLPSLEVISERLGLSQDVAGATFMAAGSSAPELVTAFLGVFVTKGDIGVSTIMGSAVYNLLCICAACGLLSSAVGRLSCWPLFRDCVAYAISVAAVIAIISDNRVYWYDGACLLLVYGVYVAVLCFDLRISEYVMQRFSPCCWCLKPRDRDSGEQQPLVGWSDDSSLRVQRRSRNDSGIFQDDSGYSHLSLSLHGLNEISDEHKSVFSMPDHDLKRILWVLSLPVSTLLFVSVPDCRRPFWKNFYMLTFLMSAVWISAFTYVLVWMVTIVGETLGIPDTVMGMTLLAAGTSIPDTVASVMVAREGKSDMAMSNIVGSNVFDMLCLGLPWFIQTVFVDVGSPVEVNSSGLVFMSCTLLLSIIFLFLAVHINGWKLDWKLGLVCLACYILFATLSILYELGIIGNNPIRSCSD.

Residues 1–35 (MRTDVFLQRRKRRDVLLSIIALLLLIFAIVHLVFC) form the signal peptide. Residues 36-78 (AGLSFQGSSSARVRRDLENASECVQPQSSEFPEGFFTVQERKD) are Extracellular-facing. A helical membrane pass occupies residues 79 to 99 (GGILIYFMIIFYMLLSVSIVC). Over 100–123 (DEYFLPSLEVISERLGLSQDVAGA) the chain is Cytoplasmic. Residues 124–144 (TFMAAGSSAPELVTAFLGVFV) form a helical membrane-spanning segment. At 145–148 (TKGD) the chain is on the extracellular side. A helical membrane pass occupies residues 149 to 169 (IGVSTIMGSAVYNLLCICAAC). The Cytoplasmic segment spans residues 170 to 181 (GLLSSAVGRLSC). A helical transmembrane segment spans residues 182 to 202 (WPLFRDCVAYAISVAAVIAII). Topologically, residues 203 to 207 (SDNRV) are extracellular. The chain crosses the membrane as a helical span at residues 208–228 (YWYDGACLLLVYGVYVAVLCF). The Cytoplasmic portion of the chain corresponds to 229 to 315 (DLRISEYVMQ…KSVFSMPDHD (87 aa)). The chain crosses the membrane as a helical span at residues 316–336 (LKRILWVLSLPVSTLLFVSVP). Residues 337–350 (DCRRPFWKNFYMLT) lie on the Extracellular side of the membrane. Residues 351-371 (FLMSAVWISAFTYVLVWMVTI) traverse the membrane as a helical segment. The Cytoplasmic segment spans residues 372–381 (VGETLGIPDT). Residues 382 to 402 (VMGMTLLAAGTSIPDTVASVM) traverse the membrane as a helical segment. The Extracellular portion of the chain corresponds to 403–420 (VAREGKSDMAMSNIVGSN). A helical membrane pass occupies residues 421-441 (VFDMLCLGLPWFIQTVFVDVG). The Cytoplasmic portion of the chain corresponds to 442–450 (SPVEVNSSG). Residues 451–471 (LVFMSCTLLLSIIFLFLAVHI) form a helical membrane-spanning segment. Residues 472-482 (NGWKLDWKLGL) are Extracellular-facing. A helical membrane pass occupies residues 483–503 (VCLACYILFATLSILYELGII). The Cytoplasmic portion of the chain corresponds to 504–513 (GNNPIRSCSD).

This sequence belongs to the Ca(2+):cation antiporter (CaCA) (TC 2.A.19) family. SLC24A subfamily. As to expression, highly expressed in melanin-producing cells. Colocalizes with melanin biosynthesis marker dct.

The protein localises to the golgi apparatus. It localises to the trans-Golgi network membrane. Its subcellular location is the melanosome. It carries out the reaction Ca(2+)(out) + K(+)(out) + 4 Na(+)(in) = Ca(2+)(in) + K(+)(in) + 4 Na(+)(out). Calcium, potassium:sodium antiporter that transports 1 Ca(2+) and 1 K(+) to the melanosome in exchange for 4 cytoplasmic Na(+). Involved in pigmentation, possibly by participating in ion transport in melanosomes. Predominant sodium-calcium exchanger in melanocytes. The protein is Sodium/potassium/calcium exchanger 5 (slc24a5) of Danio rerio (Zebrafish).